The chain runs to 436 residues: Cysteine--tRNA ligase (436 aa).

Residue C24 participates in Zn(2+) binding. The short motif at 26–36 is the 'HIGH' region element; it reads PTVYNHIHIGN. Zn(2+)-binding residues include C202, H227, and E231. The 'KMSKS' region signature appears at 259–263; it reads KMSKS. K262 is a binding site for ATP.

Belongs to the class-I aminoacyl-tRNA synthetase family. In terms of assembly, monomer. The cofactor is Zn(2+).

It is found in the cytoplasm. It carries out the reaction tRNA(Cys) + L-cysteine + ATP = L-cysteinyl-tRNA(Cys) + AMP + diphosphate. This is Cysteine--tRNA ligase from Ureaplasma parvum serovar 3 (strain ATCC 700970).